A 285-amino-acid polypeptide reads, in one-letter code: Chlorite dismutase (285 aa).

The N-terminal stretch at 1-38 (MKVRCVSLVAAGLLTIAGSAIGQPAPAPMPAMAPAAKP) is a signal peptide. Residue E105 participates in Ca(2+) binding. H205 serves as a coordination point for heme. R218 acts as the Proton acceptor in catalysis. 2 residues coordinate Ca(2+): D227 and T266.

It belongs to the chlorite dismutase family. Homopentamer. The cofactor is heme b.

It localises to the periplasm. It catalyses the reaction chloride + O2 = chlorite. Functionally, catalyzes the heme-dependent decomposition of chlorite to O(2) and chloride with high efficiency and specificity. Used to detoxify chlorite, a by-product of the reduction of perchlorate, a primarily anthropogenic pollutant, in perchlorate-respiring bacteria. This Ideonella dechloratans protein is Chlorite dismutase (cld).